We begin with the raw amino-acid sequence, 445 residues long: Allantoinase (445 aa).

Zn(2+) contacts are provided by H63, H65, K150, H186, H238, and D311. K150 carries the N6-carboxylysine modification.

The protein belongs to the metallo-dependent hydrolases superfamily. Allantoinase family. Homotetramer. Zn(2+) is required as a cofactor. Carboxylation allows a single lysine to coordinate two zinc ions.

It catalyses the reaction (S)-allantoin + H2O = allantoate + H(+). The protein operates within nitrogen metabolism; (S)-allantoin degradation; allantoate from (S)-allantoin: step 1/1. Functionally, catalyzes the conversion of allantoin (5-ureidohydantoin) to allantoic acid by hydrolytic cleavage of the five-member hydantoin ring. The polypeptide is Allantoinase (Streptomyces avermitilis (strain ATCC 31267 / DSM 46492 / JCM 5070 / NBRC 14893 / NCIMB 12804 / NRRL 8165 / MA-4680)).